The following is a 551-amino-acid chain: Probable 4-coumarate--CoA ligase 3 (551 aa).

Positions 205, 206, 207, 208, 209, and 213 each coordinate ATP. Residue Phe253 coordinates (E)-4-coumaroyl-AMP. Lys274 contacts CoA. The interval 276 to 346 (EPVRFLELIK…RFKGRLVIKQ (71 aa)) is SBD1. (E)-4-coumaroyl-AMP contacts are provided by Ala323, Gln346, Gly347, and Thr351. ATP-binding residues include Gln346, Gly347, Thr351, Asp430, and Arg445. The SBD2 stretch occupies residues 347–409 (GYGATELSPC…IKGPNVMLGY (63 aa)). (E)-4-coumaroyl-AMP-binding residues include Lys447 and Lys451. The CoA site is built by Lys453 and Gly454. Lys537 provides a ligand contact to ATP.

The protein belongs to the ATP-dependent AMP-binding enzyme family. It depends on Mg(2+) as a cofactor.

It catalyses the reaction (E)-4-coumarate + ATP + CoA = (E)-4-coumaroyl-CoA + AMP + diphosphate. It carries out the reaction (E)-4-coumarate + ATP + H(+) = (E)-4-coumaroyl-AMP + diphosphate. The catalysed reaction is (E)-4-coumaroyl-AMP + CoA = (E)-4-coumaroyl-CoA + AMP + H(+). The protein operates within phytoalexin biosynthesis; 3,4',5-trihydroxystilbene biosynthesis; 3,4',5-trihydroxystilbene from trans-4-coumarate: step 1/2. Carboxylate--CoA ligase that may use 4-coumarate as substrate. Follows a two-step reaction mechanism, wherein the carboxylate substrate first undergoes adenylation by ATP, followed by a thioesterification in the presence of CoA to yield the final CoA thioester. The polypeptide is Probable 4-coumarate--CoA ligase 3 (4cl3) (Dictyostelium discoideum (Social amoeba)).